Reading from the N-terminus, the 259-residue chain is Hydroxyacylglutathione hydrolase (259 aa).

The Zn(2+) site is built by H56, H58, D60, H61, H112, D133, and H171.

Belongs to the metallo-beta-lactamase superfamily. Glyoxalase II family. As to quaternary structure, monomer. Zn(2+) serves as cofactor.

It carries out the reaction an S-(2-hydroxyacyl)glutathione + H2O = a 2-hydroxy carboxylate + glutathione + H(+). The protein operates within secondary metabolite metabolism; methylglyoxal degradation; (R)-lactate from methylglyoxal: step 2/2. In terms of biological role, thiolesterase that catalyzes the hydrolysis of S-D-lactoyl-glutathione to form glutathione and D-lactic acid. The chain is Hydroxyacylglutathione hydrolase from Pseudomonas putida (strain W619).